We begin with the raw amino-acid sequence, 457 residues long: tRNA modification GTPase MnmE (457 aa).

(6S)-5-formyl-5,6,7,8-tetrahydrofolate-binding residues include Arg22, Glu83, and Arg122. Positions 219 to 378 (GLATAIIGRP…LEEAIKTLFF (160 aa)) constitute a TrmE-type G domain. K(+) is bound at residue Asn229. GTP is bound by residues 229-234 (NVGKSS), 248-254 (TDIAGTT), and 273-276 (DTAG). Ser233 lines the Mg(2+) pocket. Positions 248, 250, and 253 each coordinate K(+). Thr254 contacts Mg(2+). Lys457 contacts (6S)-5-formyl-5,6,7,8-tetrahydrofolate.

This sequence belongs to the TRAFAC class TrmE-Era-EngA-EngB-Septin-like GTPase superfamily. TrmE GTPase family. Homodimer. Heterotetramer of two MnmE and two MnmG subunits. It depends on K(+) as a cofactor.

It is found in the cytoplasm. Its function is as follows. Exhibits a very high intrinsic GTPase hydrolysis rate. Involved in the addition of a carboxymethylaminomethyl (cmnm) group at the wobble position (U34) of certain tRNAs, forming tRNA-cmnm(5)s(2)U34. The polypeptide is tRNA modification GTPase MnmE (Listeria welshimeri serovar 6b (strain ATCC 35897 / DSM 20650 / CCUG 15529 / CIP 8149 / NCTC 11857 / SLCC 5334 / V8)).